Here is a 447-residue protein sequence, read N- to C-terminus: Argininosuccinate synthase (447 aa).

ATP-binding positions include 17-25 (AFSGGLDTS) and alanine 43. Tyrosine 99 is an L-citrulline binding site. Residues glycine 129 and threonine 131 each coordinate ATP. Threonine 131, asparagine 135, and aspartate 136 together coordinate L-aspartate. Asparagine 135 lines the L-citrulline pocket. An ATP-binding site is contributed by aspartate 136. Positions 139 and 192 each coordinate L-citrulline. Aspartate 194 contacts ATP. L-citrulline is bound by residues threonine 201, glutamate 203, and glutamate 280.

The protein belongs to the argininosuccinate synthase family. Type 2 subfamily. As to quaternary structure, homotetramer.

It localises to the cytoplasm. It catalyses the reaction L-citrulline + L-aspartate + ATP = 2-(N(omega)-L-arginino)succinate + AMP + diphosphate + H(+). The protein operates within amino-acid biosynthesis; L-arginine biosynthesis; L-arginine from L-ornithine and carbamoyl phosphate: step 2/3. The protein is Argininosuccinate synthase of Escherichia coli (strain K12 / MC4100 / BW2952).